The chain runs to 161 residues: uncharacterized protein (161 aa).

A coiled-coil region spans residues 1 to 29 (MTLYDTVKELQEKLRNGEIEINTFLERLG).

This is an uncharacterized protein from Acidianus convivator (ATV).